Reading from the N-terminus, the 224-residue chain is Ribosomal RNA small subunit methyltransferase G (224 aa).

Residues glycine 89, phenylalanine 94, 140-141 (AE), and arginine 153 contribute to the S-adenosyl-L-methionine site.

It belongs to the methyltransferase superfamily. RNA methyltransferase RsmG family.

It localises to the cytoplasm. Specifically methylates the N7 position of a guanine in 16S rRNA. The chain is Ribosomal RNA small subunit methyltransferase G from Bacteroides fragilis (strain YCH46).